The chain runs to 1466 residues: ABC transporter G family member 40 (1466 aa).

Residues 1-21 are disordered; sequence MSHRHHAALVASASGRSPSWG. One can recognise an ABC transporter 1 domain in the interval 176–449; it reads GLIGQFGSSN…FEASGFRCPQ (274 aa). 209–216 lines the ATP pocket; that stretch reads GPPSSGKS. In terms of domain architecture, ABC transmembrane type-2 1 spans 527-740; that stretch reads ESLKAVLCRE…SQNAISINEF (214 aa). 6 consecutive transmembrane segments (helical) span residues 545-565, 581-601, 633-653, 664-684, 690-710, and 776-796; these read FLYIFKVTQLIILAFLSMTVF, FLGALTFNLITVMFNGLSELN, VPVSLVEATVWVVITYYVMGF, FLAFFVTHLMAMALFRFLGAI, IAISFGMLVLLIVFVFGGFVI, and FWLSIGALVGFIILFNTLYIL. The segment covering 821-831 has biased composition (basic and acidic residues); it reads YTETRNEEHRS. The segment at 821–851 is disordered; the sequence is YTETRNEEHRSRTSTTTSSIPTSANGEGNRP. The segment covering 833–843 has biased composition (low complexity); sequence TSTTTSSIPTS. The 253-residue stretch at 865 to 1117 folds into the ABC transporter 2 domain; that stretch reads LCFNHLNYYV…KLVEYFETIL (253 aa). 910–917 contributes to the ATP binding site; sequence GVSGAGKT. The ABC transmembrane type-2 2 domain occupies 1190-1404; it reads IQCVANLWKQ…TIYGVIASQF (215 aa). The next 7 membrane-spanning stretches (helical) occupy residues 1209–1229, 1241–1261, 1297–1317, 1327–1347, 1355–1375, 1396–1416, and 1435–1455; these read YNSLRYLTTFLYGLFFGTVFW, LYNLLGATYAAIFFIGATNCM, FIYNIIQGILYTVIIYAMIGY, FLFFIVSSFNYFTFFGMMLVA, ANILITFALPLWNLFAGFLIF, IYGVIASQFGGNGGSISVPGG, and FLGYVILAHFGFMAAFVLIFG.

This sequence belongs to the ABC transporter superfamily. ABCG family. PDR (TC 3.A.1.205) subfamily.

Its subcellular location is the membrane. The protein is ABC transporter G family member 40 of Oryza sativa subsp. japonica (Rice).